A 632-amino-acid polypeptide reads, in one-letter code: Chaperone protein HtpG (632 aa).

The interval 1 to 339 (MTQQTMSFQA…SSDLPLNVSR (339 aa)) is a; substrate-binding. Residues 340–559 (EILQESRDVK…DNDMSGYLQR (220 aa)) are b. Residues 560 to 632 (MLKAAGQSAP…TNALLLSRAA (73 aa)) are c.

This sequence belongs to the heat shock protein 90 family. In terms of assembly, homodimer.

It localises to the cytoplasm. In terms of biological role, molecular chaperone. Has ATPase activity. In Burkholderia mallei (strain NCTC 10247), this protein is Chaperone protein HtpG.